A 443-amino-acid chain; its full sequence is Exodeoxyribonuclease 7 large subunit (443 aa).

This sequence belongs to the XseA family. In terms of assembly, heterooligomer composed of large and small subunits.

The protein resides in the cytoplasm. The catalysed reaction is Exonucleolytic cleavage in either 5'- to 3'- or 3'- to 5'-direction to yield nucleoside 5'-phosphates.. Bidirectionally degrades single-stranded DNA into large acid-insoluble oligonucleotides, which are then degraded further into small acid-soluble oligonucleotides. In Legionella pneumophila (strain Paris), this protein is Exodeoxyribonuclease 7 large subunit.